A 474-amino-acid polypeptide reads, in one-letter code: Fumarate hydratase class II (474 aa).

Substrate-binding positions include 104–106, 128–131, 138–140, and Thr186; these read SGT, HPND, and SSN. Catalysis depends on His187, which acts as the Proton donor/acceptor. Residue Ser318 is part of the active site. Residues Ser319 and 324 to 326 contribute to the substrate site; that span reads KVN.

It belongs to the class-II fumarase/aspartase family. Fumarase subfamily. As to quaternary structure, homotetramer.

It localises to the cytoplasm. It carries out the reaction (S)-malate = fumarate + H2O. It participates in carbohydrate metabolism; tricarboxylic acid cycle; (S)-malate from fumarate: step 1/1. Functionally, involved in the TCA cycle. Catalyzes the stereospecific interconversion of fumarate to L-malate. This Mycobacterium bovis (strain ATCC BAA-935 / AF2122/97) protein is Fumarate hydratase class II.